Here is a 210-residue protein sequence, read N- to C-terminus: MGCASSKQFKRPPGYEEPAVLAAQTTFTVNEVEALRELYNKMSYSIIKDGLIHKEEFQLALFRNSRKANLFADRVFDLFDLKRNGVIEFGEFVRSLSVFHPKAPKSEKTAFAFKLYDLRGTGYIEKEELREMVLALLDESDLHLSECAVEAIVDNTFSQADSNGDGRIDPEEWEEFVKANPASLRNMSLPYLQDITMAFPSFVMHSEAHD.

Glycine 2 carries the N-myristoyl glycine lipid modification. EF-hand domains lie at glutamate 31–arginine 66, lysine 67–lysine 102, proline 104–glutamate 139, and alanine 148–serine 183. Ca(2+) is bound by residues aspartate 161, asparagine 163, aspartate 165, arginine 167, and glutamate 172.

Belongs to the calcineurin regulatory subunit family. In terms of assembly, homodimer. Interacts with CIPK24. Expressed in leaves.

It is found in the cell membrane. Acts as a calcium sensor involved in the regulatory pathway for the control of intracellular Na(+) and K(+) homeostasis and salt tolerance. Operates in synergy with CIPK24 to activate the plasma membrane Na(+)/H(+) antiporter SOS1. May function as positive regulator of salt stress responses. CBL proteins interact with CIPK serine-threonine protein kinases. Binding of a CBL protein to the regulatory NAF domain of a CIPK protein lead to the activation of the kinase in a calcium-dependent manner. In Oryza sativa subsp. japonica (Rice), this protein is Calcineurin B-like protein 4 (CBL4).